The following is an 888-amino-acid chain: Glutamate receptor 3 (888 aa).

Positions 1–22 (MGQSVLRAVFFLVLGLLGHSHG) are cleaved as a signal peptide. Topologically, residues 23–546 (GFPNTISIGG…GVFSFLDPLA (524 aa)) are extracellular. Residues Asn-57, Asn-260, Asn-374, Asn-409, and Asn-416 are each glycosylated (N-linked (GlcNAc...) asparagine). A disulfide bridge connects residues Cys-85 and Cys-334. The L-glutamate site is built by Pro-502, Thr-504, and Arg-509. The chain crosses the membrane as a helical span at residues 547 to 567 (YEIWMCIVFAYIGVSVVLFLV). At 568 to 596 (SRFSPYEWHLEDNNEEPRDPQSPPDPPNE) the chain is on the cytoplasmic side. The helical; Pore-forming intramembrane region spans 597–612 (FGIFNSLWFSLGAFMQ). The stretch at 613-615 (QGC) is an intramembrane region. Cys-615 carries S-palmitoyl cysteine lipidation. Over 616-621 (DISPRS) the chain is Cytoplasmic. Residues 622–642 (LSGRIVGGVWWFFTLIIISSY) traverse the membrane as a helical segment. At 643–817 (TANLAAFLTV…DKTSALSLSN (175 aa)) the chain is on the extracellular side. L-glutamate-binding residues include Ser-680, Thr-681, and Glu-731. Residues Cys-744 and Cys-799 are joined by a disulfide bond. The helical transmembrane segment at 818 to 838 (VAGVFYILVGGLGLAMMVALI) threads the bilayer. Over 839–888 (EFCYKSRAESKRMKLTKNTQNFKPAPATNTQNYATYREGYNVYGTESVKI) the chain is Cytoplasmic. The S-palmitoyl cysteine moiety is linked to residue Cys-841. Residues Tyr-871 and Tyr-881 each carry the phosphotyrosine modification.

This sequence belongs to the glutamate-gated ion channel (TC 1.A.10.1) family. GRIA3 subfamily. In terms of assembly, homotetramer or heterotetramer of pore-forming glutamate receptor subunits. Tetramers may be formed by the dimerization of dimers. Interacts with PICK1, GRIP1 and GRIP2. Found in a complex with GRIA1, GRIA2, GRIA4, CNIH2, CNIH3, CACNG2, CACNG3, CACNG4, CACNG5, CACNG7 and CACNG8. Interacts with CACNG5. Found in a complex with GRIA1, GRIA2, GRIA4, DLG4, CACNG8 and CNIH2.

It localises to the cell membrane. The protein localises to the postsynaptic cell membrane. Its subcellular location is the postsynaptic density membrane. It catalyses the reaction Ca(2+)(in) = Ca(2+)(out). In terms of biological role, ionotropic glutamate receptor that functions as a ligand-gated cation channel, gated by L-glutamate and glutamatergic agonists such as alpha-amino-3-hydroxy-5-methyl-4-isoxazolepropionic acid (AMPA), quisqualic acid, and kainic acid. L-glutamate acts as an excitatory neurotransmitter at many synapses in the central nervous system and plays an important role in fast excitatory synaptic transmission by inducing long-term potentiation. Binding of the excitatory neurotransmitter L-glutamate induces a conformation change, leading to the opening of the cation channel, and thereby converts the chemical signal to an electrical impulse upon entry of calcium. The receptor then desensitizes rapidly and enters a transient inactive state, characterized by the presence of bound agonist. In the presence of CACNG8, shows resensitization which is characterized by a delayed accumulation of current flux upon continued application of glutamate. The protein is Glutamate receptor 3 of Mus musculus (Mouse).